Reading from the N-terminus, the 235-residue chain is Glucosamine-6-phosphate deaminase (235 aa).

The active-site Proton acceptor; for enolization step is the Asp62. Residue Asn128 is the For ring-opening step of the active site. The Proton acceptor; for ring-opening step role is filled by His130. The active-site For ring-opening step is the Glu135.

Belongs to the glucosamine/galactosamine-6-phosphate isomerase family. NagB subfamily.

It catalyses the reaction alpha-D-glucosamine 6-phosphate + H2O = beta-D-fructose 6-phosphate + NH4(+). It functions in the pathway amino-sugar metabolism; N-acetylneuraminate degradation; D-fructose 6-phosphate from N-acetylneuraminate: step 5/5. Functionally, catalyzes the reversible isomerization-deamination of glucosamine 6-phosphate (GlcN6P) to form fructose 6-phosphate (Fru6P) and ammonium ion. The protein is Glucosamine-6-phosphate deaminase of Streptococcus pneumoniae serotype 2 (strain D39 / NCTC 7466).